The following is a 744-amino-acid chain: Eukaryotic translation initiation factor 3 subunit B (744 aa).

Residues 1 to 20 (MAPSFDHLPDPEEDEYDEEE) are disordered. A compositionally biased stretch (acidic residues) spans 11 to 20 (PEEDEYDEEE). Residues 40–126 (TFVVIDGLPE…HTLRVNKLTD (87 aa)) enclose the RRM domain. 4 WD repeats span residues 193-232 (DRQH…RQKR), 234-290 (AHPF…PLRS), 307-348 (PVKR…LLDK), and 577-622 (ADHY…LREE). A compositionally biased stretch (basic and acidic residues) spans 699 to 714 (EREDAGLPRDPLEPLK). Positions 699–722 (EREDAGLPRDPLEPLKSKMASGDE) are disordered.

The protein belongs to the eIF-3 subunit B family. Component of the eukaryotic translation initiation factor 3 (eIF-3) complex.

Its subcellular location is the cytoplasm. In terms of biological role, RNA-binding component of the eukaryotic translation initiation factor 3 (eIF-3) complex, which is involved in protein synthesis of a specialized repertoire of mRNAs and, together with other initiation factors, stimulates binding of mRNA and methionyl-tRNAi to the 40S ribosome. The eIF-3 complex specifically targets and initiates translation of a subset of mRNAs involved in cell proliferation. The chain is Eukaryotic translation initiation factor 3 subunit B (prt1) from Sclerotinia sclerotiorum (strain ATCC 18683 / 1980 / Ss-1) (White mold).